Here is a 381-residue protein sequence, read N- to C-terminus: Chaperone protein DnaJ (381 aa).

One can recognise a J domain in the interval D5–G70. The CR-type zinc-finger motif lies at G136–T214. Positions 149, 152, 166, 169, 188, 191, 202, and 205 each coordinate Zn(2+). CXXCXGXG motif repeat units follow at residues C149–G156, C166–G173, C188–G195, and C202–G209.

The protein belongs to the DnaJ family. In terms of assembly, homodimer. Requires Zn(2+) as cofactor.

The protein localises to the cytoplasm. In terms of biological role, participates actively in the response to hyperosmotic and heat shock by preventing the aggregation of stress-denatured proteins and by disaggregating proteins, also in an autonomous, DnaK-independent fashion. Unfolded proteins bind initially to DnaJ; upon interaction with the DnaJ-bound protein, DnaK hydrolyzes its bound ATP, resulting in the formation of a stable complex. GrpE releases ADP from DnaK; ATP binding to DnaK triggers the release of the substrate protein, thus completing the reaction cycle. Several rounds of ATP-dependent interactions between DnaJ, DnaK and GrpE are required for fully efficient folding. Also involved, together with DnaK and GrpE, in the DNA replication of plasmids through activation of initiation proteins. The protein is Chaperone protein DnaJ of Vibrio parahaemolyticus serotype O3:K6 (strain RIMD 2210633).